The chain runs to 494 residues: UDP-glucose 6-dehydrogenase (494 aa).

NAD(+) is bound by residues 11–16 (GAGYVG), Asp36, Arg41, and 89–93 (VNTPT). The interval 88-110 (SVNTPTKTYGMGKGRAADLKYIE) is disordered. An N6-acetyllysine modification is found at Lys107. The interval 129–135 (KSTVPVR) is allosteric switch region. 130–132 (STV) contributes to the NAD(+) binding site. Glu161 functions as the Proton donor/acceptor in the catalytic mechanism. Substrate is bound by residues 161–165 (EFLAE), 220–224 (KLAAN), Arg260, and 267–273 (KASVGFG). Position 165 (Glu165) interacts with NAD(+). Lys220 serves as the catalytic Proton donor/acceptor. Cys276 (nucleophile) is an active-site residue. 276-279 (CFQK) contributes to the NAD(+) binding site. Residues 321–325 (SLFNT) form an important for formation of active hexamer structure region. 338–339 (FK) provides a ligand contact to substrate. Arg346 is a binding site for NAD(+). Arg442 contacts substrate. Positions 466 to 494 (VSSKRIPYAPSGEIPKFSLQDPPNKKPKV) are disordered. A Phosphoserine modification is found at Ser476.

This sequence belongs to the UDP-glucose/GDP-mannose dehydrogenase family. Homohexamer.

The enzyme catalyses UDP-alpha-D-glucose + 2 NAD(+) + H2O = UDP-alpha-D-glucuronate + 2 NADH + 3 H(+). It functions in the pathway nucleotide-sugar biosynthesis; UDP-alpha-D-glucuronate biosynthesis; UDP-alpha-D-glucuronate from UDP-alpha-D-glucose: step 1/1. Its activity is regulated as follows. UDP-alpha-D-xylose (UDX) acts as a feedback inhibitor. It binds at the same site as the substrate, but functions as allosteric inhibitor by triggering a conformation change that disrupts the active hexameric ring structure and gives rise to an inactive, horseshoe-shaped hexamer. Catalyzes the formation of UDP-alpha-D-glucuronate, a constituent of complex glycosaminoglycans. Required for the biosynthesis of chondroitin sulfate and heparan sulfate. Required for embryonic development via its role in the biosynthesis of glycosaminoglycans. Required for proper brain and neuronal development. The chain is UDP-glucose 6-dehydrogenase (UGDH) from Pongo abelii (Sumatran orangutan).